Reading from the N-terminus, the 387-residue chain is S-adenosylmethionine synthase (387 aa).

Histidine 16 is an ATP binding site. Aspartate 18 provides a ligand contact to Mg(2+). Glutamate 44 is a binding site for K(+). Glutamate 57 and glutamine 100 together coordinate L-methionine. The segment at 100–110 (QSPDIAQGVDR) is flexible loop. ATP-binding positions include 167–169 (DAK), 232–233 (RF), aspartate 241, 247–248 (RK), alanine 264, and lysine 268. Residue aspartate 241 coordinates L-methionine. Residue lysine 272 coordinates L-methionine.

This sequence belongs to the AdoMet synthase family. Homotetramer; dimer of dimers. Requires Mg(2+) as cofactor. K(+) is required as a cofactor.

Its subcellular location is the cytoplasm. It catalyses the reaction L-methionine + ATP + H2O = S-adenosyl-L-methionine + phosphate + diphosphate. The protein operates within amino-acid biosynthesis; S-adenosyl-L-methionine biosynthesis; S-adenosyl-L-methionine from L-methionine: step 1/1. Functionally, catalyzes the formation of S-adenosylmethionine (AdoMet) from methionine and ATP. The overall synthetic reaction is composed of two sequential steps, AdoMet formation and the subsequent tripolyphosphate hydrolysis which occurs prior to release of AdoMet from the enzyme. The sequence is that of S-adenosylmethionine synthase from Cupriavidus necator (strain ATCC 17699 / DSM 428 / KCTC 22496 / NCIMB 10442 / H16 / Stanier 337) (Ralstonia eutropha).